A 136-amino-acid polypeptide reads, in one-letter code: Transcription antitermination protein NusB (136 aa).

It belongs to the NusB family.

Involved in transcription antitermination. Required for transcription of ribosomal RNA (rRNA) genes. Binds specifically to the boxA antiterminator sequence of the ribosomal RNA (rrn) operons. The chain is Transcription antitermination protein NusB from Salinispora tropica (strain ATCC BAA-916 / DSM 44818 / JCM 13857 / NBRC 105044 / CNB-440).